Here is a 425-residue protein sequence, read N- to C-terminus: Oxalate decarboxylase ARB_02208 (425 aa).

The N-terminal stretch at 1–19 is a signal peptide; the sequence is MKFGSALVAAVAAVAGVAA. Positions 73 to 236 constitute a Cupin type-1 1 domain; that stretch reads FSLSKTRMFH…FNISTGGTFD (164 aa). The Mn(2+) site is built by H116, H118, E122, and H161. 4 N-linked (GlcNAc...) asparagine glycosylation sites follow: N228, N247, N254, and N265. The 145-residue stretch at 270–414 folds into the Cupin type-1 2 domain; sequence FHIRDAPEIQ…AINVPIDVID (145 aa). Residues H317, H319, E324, and H363 each coordinate Mn(2+). N367 is a glycosylation site (N-linked (GlcNAc...) asparagine). The active-site Proton donor is the E378.

Requires Mn(2+) as cofactor.

Its subcellular location is the secreted. It carries out the reaction oxalate + H(+) = formate + CO2. Functionally, converts oxalate to formate and CO(2) in an O(2)-dependent reaction. Can also catalyze minor side reactions: oxalate oxidation to produce H(2)O(2), and oxalate-dependent, H(2)O(2)-independent dye oxidations. The chain is Oxalate decarboxylase ARB_02208 from Arthroderma benhamiae (strain ATCC MYA-4681 / CBS 112371) (Trichophyton mentagrophytes).